The primary structure comprises 482 residues: MVIKKPANKVDKKSTFKSSNKKKNPFKSSFLTKNKDLIYRILFTLLALIIIRLGVYITVPGVTLDKRFATDSSRIQFFQLLSTLGGGSIGRFSILALGVSPYITASIIVQLLSTDVIPVLTRWSKSGERGRKKLDKLTKIIMIPFALMQAEATIFTLSSQGLIIPGWDNTNAIANSAFYYILIPLVMLGGSFFMLWIADQITIKGIGNGISIVIFIGIIISMPSNLKSTFEYWVSNSGEEANIFFSGLLNFMIYISVFLLVILSVVIMNEAERKIPIQQTGSGLTDSSEHTPYLPLKLNNAGVIPVIFASAIISTPITISQIIEAVNPDSGFVIFTRDYLSFNTWWGISIFGILIVLFTFLYSQVQINPEKIAENFQKSGTFIPGIKPGKDTTKYLTGIINRLSVVGSVFLAIIALLPYVISKLTQLPSNLAIGGTGLIICISVAIQTVQQLKGRIIQQNFIEKKKEKFTNNINKNKTSHIW.

The segment at 1–22 is disordered; the sequence is MVIKKPANKVDKKSTFKSSNKK. The next 10 membrane-spanning stretches (helical) occupy residues 41 to 61, 92 to 112, 137 to 157, 177 to 197, 201 to 221, 243 to 263, 303 to 323, 342 to 362, 405 to 425, and 426 to 446; these read ILFT…TVPG, FSIL…VQLL, LTKI…IFTL, AFYY…MLWI, ITIK…IIIS, IFFS…LVIL, VIPV…SQII, FNTW…TFLY, VVGS…SKLT, and QLPS…SVAI.

It belongs to the SecY/SEC61-alpha family. Component of the Sec protein translocase complex. Heterotrimer consisting of SecY, SecE and SecG subunits. The heterotrimers can form oligomers, although 1 heterotrimer is thought to be able to translocate proteins. Interacts with the ribosome. Interacts with SecDF, and other proteins may be involved. Interacts with SecA.

It localises to the cell membrane. Its function is as follows. The central subunit of the protein translocation channel SecYEG. Consists of two halves formed by TMs 1-5 and 6-10. These two domains form a lateral gate at the front which open onto the bilayer between TMs 2 and 7, and are clamped together by SecE at the back. The channel is closed by both a pore ring composed of hydrophobic SecY resides and a short helix (helix 2A) on the extracellular side of the membrane which forms a plug. The plug probably moves laterally to allow the channel to open. The ring and the pore may move independently. The chain is Protein translocase subunit SecY from Mycoplasma capricolum subsp. capricolum (strain California kid / ATCC 27343 / NCTC 10154).